The following is a 100-amino-acid chain: Urease subunit gamma (100 aa).

It belongs to the urease gamma subunit family. As to quaternary structure, heterotrimer of UreA (gamma), UreB (beta) and UreC (alpha) subunits. Three heterotrimers associate to form the active enzyme.

The protein localises to the cytoplasm. It carries out the reaction urea + 2 H2O + H(+) = hydrogencarbonate + 2 NH4(+). Its pathway is nitrogen metabolism; urea degradation; CO(2) and NH(3) from urea (urease route): step 1/1. This is Urease subunit gamma from Polaromonas naphthalenivorans (strain CJ2).